Reading from the N-terminus, the 338-residue chain is Glutamyl-tRNA reductase (338 aa).

Substrate-binding positions include Thr50–Arg53, Ser102, Glu107–Glu109, and Gln113. Cys51 acts as the Nucleophile in catalysis. Gly181 to Asn186 is a binding site for NADP(+).

Belongs to the glutamyl-tRNA reductase family. As to quaternary structure, homodimer.

It carries out the reaction (S)-4-amino-5-oxopentanoate + tRNA(Glu) + NADP(+) = L-glutamyl-tRNA(Glu) + NADPH + H(+). It functions in the pathway porphyrin-containing compound metabolism; protoporphyrin-IX biosynthesis; 5-aminolevulinate from L-glutamyl-tRNA(Glu): step 1/2. Its function is as follows. Catalyzes the NADPH-dependent reduction of glutamyl-tRNA(Glu) to glutamate 1-semialdehyde (GSA). This Chlamydia caviae (strain ATCC VR-813 / DSM 19441 / 03DC25 / GPIC) (Chlamydophila caviae) protein is Glutamyl-tRNA reductase.